A 1012-amino-acid chain; its full sequence is RNA-binding protein 26 (1012 aa).

A Glycyl lysine isopeptide (Lys-Gly) (interchain with G-Cter in SUMO2) cross-link involves residue Lys-94. Residues Leu-98 to Ser-127 are a coiled coil. Lys-106 participates in a covalent cross-link: Glycyl lysine isopeptide (Lys-Gly) (interchain with G-Cter in SUMO1); alternate. Residue Lys-106 forms a Glycyl lysine isopeptide (Lys-Gly) (interchain with G-Cter in SUMO2); alternate linkage. The span at Lys-106–Lys-118 shows a compositional bias: basic and acidic residues. The interval Lys-106–Ser-236 is disordered. Ser-127 is modified (phosphoserine). Basic and acidic residues predominate over residues Arg-134–Arg-168. Positions Tyr-169 to Ser-186 are enriched in basic residues. 2 stretches are compositionally biased toward basic and acidic residues: residues Trp-187 to Arg-201 and Arg-209 to Pro-227. The C3H1-type zinc-finger motif lies at Pro-288–Asp-316. The segment covering Gln-334 to Gln-388 has biased composition (pro residues). Disordered stretches follow at residues Gln-334–Pro-404 and Ile-465–Arg-520. The span at Ala-394–Pro-404 shows a compositional bias: low complexity. Ser-501 bears the Phosphoserine mark. An N6-acetyllysine modification is found at Lys-515. Ser-523 bears the Phosphoserine mark. Positions Thr-537–Glu-611 constitute an RRM 1 domain. The residue at position 621 (Ser-621) is a Phosphoserine. A disordered region spans residues Pro-647–Gln-667. Coiled-coil stretches lie at residues Asp-724 to Ser-800 and Lys-828 to Lys-852. Residues Ser-858–Ala-889 form a disordered region. The segment covering Arg-862–Gly-882 has biased composition (basic residues). The 70-residue stretch at Arg-896–Pro-965 folds into the RRM 2 domain. Residues Ser-970–Arg-1012 are disordered. Over residues Asp-973 to Asn-1005 the composition is skewed to acidic residues.

Expressed in testis and ovary.

In terms of biological role, may be involved in the turnover of nuclear polyadenylated (pA+) RNA. This is RNA-binding protein 26 from Mus musculus (Mouse).